The chain runs to 285 residues: MPHRCAAQVVAGYRSTVSLVLVEHPRPEIAQITLNRPERMNSMAFDVMVPLKEALAQVSYDNSVRVVVLTGAGRGFSSGADHKSAGVVPHVENLTRPTYALRSMELLDDVILMLRRLHQPVIAAVNGPAIGGGLCLALAADIRVASSSAYFRAAGINNGLTASELGLSYLLPRAIGSSRAFEIMLTGRDVSAEEAERIGLVSRQVPDEQLLDACYAIAARMAGFSRPGIELTKRTLWSGLDAASLEAHMQAEGLGQLFVRLLTANFEEAVAARAEQRAPVFTDDT.

This sequence belongs to the enoyl-CoA hydratase/isomerase family.

It carries out the reaction a (3S)-3-hydroxyacyl-CoA = a (2E)-enoyl-CoA + H2O. The enzyme catalyses a 4-saturated-(3S)-3-hydroxyacyl-CoA = a (3E)-enoyl-CoA + H2O. Its function is as follows. Could possibly oxidize fatty acids using specific components. The sequence is that of Probable enoyl-CoA hydratase echA12 (echA12) from Mycobacterium bovis (strain ATCC BAA-935 / AF2122/97).